A 542-amino-acid polypeptide reads, in one-letter code: Chaperonin GroEL 1 (542 aa).

ATP contacts are provided by residues threonine 29–proline 32, aspartate 86–threonine 90, glycine 414, aspartate 479–leucine 481, and aspartate 495.

It belongs to the chaperonin (HSP60) family. Forms a cylinder of 14 subunits composed of two heptameric rings stacked back-to-back. Interacts with the co-chaperonin GroES.

Its subcellular location is the cytoplasm. It catalyses the reaction ATP + H2O + a folded polypeptide = ADP + phosphate + an unfolded polypeptide.. Functionally, together with its co-chaperonin GroES, plays an essential role in assisting protein folding. The GroEL-GroES system forms a nano-cage that allows encapsulation of the non-native substrate proteins and provides a physical environment optimized to promote and accelerate protein folding. This Synechococcus sp. (strain JA-3-3Ab) (Cyanobacteria bacterium Yellowstone A-Prime) protein is Chaperonin GroEL 1.